The primary structure comprises 184 residues: Cobalamin adenosyltransferase (184 aa).

The disordered stretch occupies residues 1-21 (MGNRLSKIATRTGDAGTTGLG). Residues 10–13 (TRTG), 18–19 (TG), Lys28, 130–134 (RRAER), and Asn154 contribute to the ATP site.

This sequence belongs to the Cob(I)alamin adenosyltransferase family. As to quaternary structure, homotrimer.

It catalyses the reaction 2 cob(II)alamin + AH2 + 2 ATP = 2 adenosylcob(III)alamin + 2 triphosphate + A + 2 H(+). Is potentially allosterically regulated by GTP/GDP, which enhances its affinity for AdoCbl by 5-fold. Binds cob(II)alamin weakly in the absence of ATP. The presence of ATP (but not GTP or GDP) increases the affinity of cob(II)alamin for the enzyme, and stoichiometric binding is observed. GTP blocks the transfer of cob(II)alamin to IcmF from ATR, thus averting its reconstitution with inactive cofactor. Functionally, adenosyltransferase that catalyzes the conversion of cob(II)alamin to adenosylcob(III)alamin (AdoCbl) in the presence of ATP and an electron donor. Acts as an accessory protein of IcmF that functions in cofactor repair, since IcmF is prone to inactivation during catalytic turnover due to the occasional loss of the 5'-deoxyadenosine moiety and formation of the inactive cob(II)alamin cofactor in its active site. Thus, receives and repairs the inactive cofactor, which is then reloaded onto IcmF in a GTPase-gated step. This is Cobalamin adenosyltransferase from Cupriavidus metallidurans (strain ATCC 43123 / DSM 2839 / NBRC 102507 / CH34) (Ralstonia metallidurans).